The sequence spans 1247 residues: Probable phosphorylase b kinase regulatory subunit alpha (1247 aa).

Residues 853 to 883 form a calmodulin-binding region; it reads LKGLYEKACQQKLWGLVRHTAGMLGKRVEDL. Residues S1030 and S1033 each carry the phosphoserine modification. Positions 1052–1089 are calmodulin-binding; the sequence is DRQGQWLRRRRLDGALNRVPRDFYSRVWTVLEKCQGLA. Residue C1244 is the site of S-farnesyl cysteine attachment.

It belongs to the phosphorylase b kinase regulatory chain family. Although the final Cys may be farnesylated, the terminal tripeptide is probably not removed, and the C-terminus is not methylated.

It localises to the cell membrane. Its pathway is glycan biosynthesis; glycogen metabolism. In terms of biological role, phosphorylase b kinase catalyzes the phosphorylation of serine in certain substrates, including troponin I. The alpha chain may bind calmodulin. The protein is Probable phosphorylase b kinase regulatory subunit alpha of Drosophila melanogaster (Fruit fly).